The sequence spans 257 residues: Capsid protein (257 aa).

The Bipartite nuclear localization signal motif lies at 3–20 (KRTGDILMSSPLSKFRRK). A Nuclear localization signal motif is present at residues 40-54 (KRRSWTYRPMYRKPR). Residues 68–85 (CEGPCKVQSYEQRDDVKH) fold into a zinc finger. Residues 101 to 122 (ITHRVGKRFCIKSIYILGKIWM) carry the Nuclear export signal motif. Positions 201–248 (KRFFKVNTHVVYNHQEQAKYENHTENALLLYMACTHASNPVYATLKIR) match the Bipartite nuclear localization signal motif.

It belongs to the geminiviridae capsid protein family. As to quaternary structure, homomultimer. Binds to single-stranded and double-stranded viral DNA. Interacts (via nuclear localization signals) with host importin alpha-1a.

It localises to the virion. The protein resides in the host nucleus. Functionally, encapsidates the viral genome into characteristic twinned ('geminate') particles. Binds the genomic viral ssDNA and shuttles it into and out of the cell nucleus. Plays a role in protection of the genome from degradation, virus acquisition and transmission by insect vectors, infectivity, and systemic movement. The CP of monopartite geminiviruses is absolutely essential for virus movement. This Solanum lycopersicum (Tomato) protein is Capsid protein.